The following is a 234-amino-acid chain: Segregation and condensation protein A (234 aa).

Belongs to the ScpA family. In terms of assembly, component of a cohesin-like complex composed of ScpA, ScpB and the Smc homodimer, in which ScpA and ScpB bind to the head domain of Smc. The presence of the three proteins is required for the association of the complex with DNA.

The protein localises to the cytoplasm. Its function is as follows. Participates in chromosomal partition during cell division. May act via the formation of a condensin-like complex containing Smc and ScpB that pull DNA away from mid-cell into both cell halves. The chain is Segregation and condensation protein A from Streptococcus pyogenes serotype M6 (strain ATCC BAA-946 / MGAS10394).